Here is a 576-residue protein sequence, read N- to C-terminus: MVKASEKEHEKYKPKLFDLENVKKKNSSSRHFKRWNSDSALRIEDPDIDDGTVFKKTATSSIQPILPVLAMDEQPQPREATDEESQKDSGKREIISFLGYNEKFTRDQVILRFRGLQAKSCYFAYVTELEQMKDKFAKLLLGEDMSGGSKGVSSALALSNAITNLAASAFGEIRRLEAISEDKKERWRREIGWLLSVTDHIVEFSPTHQTNEDGSSMEVMTTKQRTDLVSNIPSLKKLDEMLLDCLDKFKDQDEFYYVTPGSPESENSNSTRNDDKWWLPIVKVPPKGLSETLKRFLLSQRECVCQVLNSAMAINSQVLTEMEIPESYIDSLPKKGRASLGDMIYRMITLEMFDAEQFLLEMDLSSEHKILDLKNKFEASVVIWQRKIVQIDNKSSSPWSTNLSMDKRQQLEERAATILQLIKQEFPGISQSTLDISKIQFNRDIGLAIVESYSRILESLAHTVMSRIEDVLEADQLTQNPELAMCKIHIVKETESPEKEEEPNFCLLEDRPKKQKPTISLSEVMQWNIETNEPRKEKSDKKLLTRVSSMIMSNNKKTTYLESLGTTRSPTAGRYS.

One can recognise a PRONE domain in the interval 119-485 (KSCYFAYVTE…QLTQNPELAM (367 aa)). Positions 557–570 (KTTYLESLGTTRSP) are enriched in polar residues. Positions 557-576 (KTTYLESLGTTRSPTAGRYS) are disordered.

As to quaternary structure, interacts with PRK6. In terms of tissue distribution, specifically expressed in mature flowers.

In terms of biological role, guanine-nucleotide exchange factor (GEF) that acts as an activator of Rop (Rho of plants) GTPases by promoting the exchange of GDP for GTP. This chain is Rop guanine nucleotide exchange factor 13, found in Arabidopsis thaliana (Mouse-ear cress).